The sequence spans 419 residues: CinA-like protein (419 aa).

The protein belongs to the CinA family.

The polypeptide is CinA-like protein (Picosynechococcus sp. (strain ATCC 27264 / PCC 7002 / PR-6) (Agmenellum quadruplicatum)).